The following is a 573-amino-acid chain: MKQSQMLIPTQKEAPADAEVLSHKMMVRAGYIYQVSAGVWAYLPLAYRVIRKIEQIIREEMDKAGAVEMLLPGLLPADLWKESGRYEAYGDNLFKLKDRRERDFILGPTHEETVTSILRDAIHSYKKLPLVVYQLQDKYRDEDRPRYGILRGKEFEMLDGYSFSADQAGLDQAYDLQAKAYRNIFDRIGLDYKVILADSGTMGGKNSQEFSAPAAIGEDVIAYTDGDYAANLEKATTKFTPTKQIGEEAELTKKATPGAHTVDEAAESLGLEASQILKSMVFLAKFEGEELKPVMVLMRGNDEVNETKVASYLGCEELLMASEEDTEKYLGAHPGSLGPIGVKEDVTILADQHLQGMINMALGANDDGYHYINANFNRDFKVDQFGDFRTVQEGETAPDGLPIKFTNGIEIGHIFKLGTHYSEVFGATVLDQNGRDVPMIMGCYGIGVSRLLSAISEQNADENGLVWPQAVAPFDIHVIPVNAKKEDQMAMAEGITANLEEAGYEVLVDDRKERAGVKFADADLIGVPIRVTVGKKAGEGIVEIKIRKTGETLEVHKEELATNIAILLKQTAE.

The protein belongs to the class-II aminoacyl-tRNA synthetase family. ProS type 1 subfamily. As to quaternary structure, homodimer.

It localises to the cytoplasm. It carries out the reaction tRNA(Pro) + L-proline + ATP = L-prolyl-tRNA(Pro) + AMP + diphosphate. In terms of biological role, catalyzes the attachment of proline to tRNA(Pro) in a two-step reaction: proline is first activated by ATP to form Pro-AMP and then transferred to the acceptor end of tRNA(Pro). As ProRS can inadvertently accommodate and process non-cognate amino acids such as alanine and cysteine, to avoid such errors it has two additional distinct editing activities against alanine. One activity is designated as 'pretransfer' editing and involves the tRNA(Pro)-independent hydrolysis of activated Ala-AMP. The other activity is designated 'posttransfer' editing and involves deacylation of mischarged Ala-tRNA(Pro). The misacylated Cys-tRNA(Pro) is not edited by ProRS. This chain is Proline--tRNA ligase, found in Limosilactobacillus fermentum (strain NBRC 3956 / LMG 18251) (Lactobacillus fermentum).